A 154-amino-acid chain; its full sequence is Anaerobic ribonucleoside-triphosphate reductase-activating protein (154 aa).

Positions 26, 30, and 33 each coordinate [4Fe-4S] cluster. Residues 32–34 (GCY) and G74 each bind S-adenosyl-L-methionine.

It belongs to the organic radical-activating enzymes family. As to quaternary structure, forms a tetramer composed of two NrdD and two NrdG subunits. It depends on [4Fe-4S] cluster as a cofactor.

It localises to the cytoplasm. The enzyme catalyses glycyl-[protein] + reduced [flavodoxin] + S-adenosyl-L-methionine = glycin-2-yl radical-[protein] + semiquinone [flavodoxin] + 5'-deoxyadenosine + L-methionine + H(+). Functionally, activation of anaerobic ribonucleoside-triphosphate reductase under anaerobic conditions by generation of an organic free radical, using S-adenosylmethionine and reduced flavodoxin as cosubstrates to produce 5'-deoxy-adenosine. The sequence is that of Anaerobic ribonucleoside-triphosphate reductase-activating protein (nrdG) from Escherichia coli O157:H7.